The chain runs to 426 residues: Serine--tRNA ligase (426 aa).

229 to 231 (TAE) contributes to the L-serine binding site. Residues 260–262 (RTE) and Val-276 contribute to the ATP site. Glu-283 serves as a coordination point for L-serine. An ATP-binding site is contributed by 350-353 (EVTS). Residue Thr-386 participates in L-serine binding.

It belongs to the class-II aminoacyl-tRNA synthetase family. Type-1 seryl-tRNA synthetase subfamily. In terms of assembly, homodimer. The tRNA molecule binds across the dimer.

Its subcellular location is the cytoplasm. The enzyme catalyses tRNA(Ser) + L-serine + ATP = L-seryl-tRNA(Ser) + AMP + diphosphate + H(+). The catalysed reaction is tRNA(Sec) + L-serine + ATP = L-seryl-tRNA(Sec) + AMP + diphosphate + H(+). The protein operates within aminoacyl-tRNA biosynthesis; selenocysteinyl-tRNA(Sec) biosynthesis; L-seryl-tRNA(Sec) from L-serine and tRNA(Sec): step 1/1. Functionally, catalyzes the attachment of serine to tRNA(Ser). Is also able to aminoacylate tRNA(Sec) with serine, to form the misacylated tRNA L-seryl-tRNA(Sec), which will be further converted into selenocysteinyl-tRNA(Sec). This Rhodopirellula baltica (strain DSM 10527 / NCIMB 13988 / SH1) protein is Serine--tRNA ligase.